We begin with the raw amino-acid sequence, 410 residues long: Voltage-dependent chloride channel 2, chloroplastic (410 aa).

Topologically, residues 1–110 are lumenal, thylakoid; that stretch reads MYQSMNLSFS…RHVSSSPSSR (110 aa). A helical transmembrane segment spans residues 111–131; the sequence is VILSLIPPVFFFTTVAILIAG. Over 132–147 the chain is Stromal; that stretch reads YNSAVDLDWLPDFFPV. The helical transmembrane segment at 148-168 threads the bilayer; sequence LRASPLPYQLTAPALALLLVF. Topologically, residues 169–315 are lumenal, thylakoid; the sequence is RTEASYSRFE…PLSYTRLTSR (147 aa). 2 helical membrane-spanning segments follow: residues 316–336 and 337–357; these read FLVL…HWNV and VPAT…GVLI. The Lumenal, thylakoid portion of the chain corresponds to 358–410; it reads EEPFSMLALDELCAMVLSNSDEAVESKEVIRNRIIAKKRILEIKHSSNGWHKS.

This sequence belongs to the anion channel-forming bestrophin (TC 1.A.46) family. Voltage-dependent chloride channel subfamily. In terms of tissue distribution, mostly expressed in flowers and, to a lower extent, in leaves, stems and roots.

Its subcellular location is the plastid. It is found in the chloroplast thylakoid membrane. It carries out the reaction chloride(in) = chloride(out). Voltage-dependent chloride (Cl) channel probably contributing to proton motive force (PMF) partitioning across the thylakoid membrane by anion influx into the lumen. Influences thylakoid ultrastructure, including lumen size and organization. This Arabidopsis thaliana (Mouse-ear cress) protein is Voltage-dependent chloride channel 2, chloroplastic.